We begin with the raw amino-acid sequence, 452 residues long: FERM domain-containing protein 8 (452 aa).

One can recognise an FERM domain in the interval 28–374; sequence MDVIIYLIND…YCIELSQSTE (347 aa). Positions 373-387 are enriched in polar residues; that stretch reads TESPASDSTPGNSQL. Residues 373 to 395 form a disordered region; that stretch reads TESPASDSTPGNSQLSEKRSKLK.

The protein localises to the cytoplasm. It is found in the cytosol. It localises to the cell membrane. Promotes the cell surface stability of RHBDF1 and RHBDF2 and prevents their degradation via the endolysosomal pathway. By acting on RHBDF proteins, involved in ADAM17-mediated ligand shedding. May negatively regulate Wnt signaling. The sequence is that of FERM domain-containing protein 8 (frmd8) from Xenopus laevis (African clawed frog).